Here is a 305-residue protein sequence, read N- to C-terminus: GS homeobox 2 (305 aa).

2 disordered regions span residues 115-151 (DAQF…AAAA) and 259-305 (KKEG…ISPL). Residues 123–140 (SHAHHHHHPPQHHHHHHQ) are compositionally biased toward basic residues. Low complexity predominate over residues 141–151 (PQQPGSAAAAA). The homeobox DNA-binding region spans 203–262 (GKRMRTAFTSTQLLELEREFSSNMYLSRLRRIEIATYLNLSEKQVKIWFQNRRVKHKKEG).

This sequence belongs to the Antp homeobox family.

The protein localises to the nucleus. In terms of biological role, transcription factor that binds 5'-CNAATTAG-3' DNA sequence and regulates the expression of numerous genes including genes important for brain development. During telencephalic development, causes ventralization of pallial progenitors and, depending on the developmental stage, specifies different neuronal fates. At early stages, necessary and sufficient to correctly specify the ventral lateral ganglionic eminence (LGE) and its major derivatives, the striatal projection neurons. At later stages, may specify LGE progenitors toward dorsal LGE fates, including olfactory bulb interneurons. The protein is GS homeobox 2 (Gsx2) of Mus musculus (Mouse).